A 207-amino-acid polypeptide reads, in one-letter code: Large ribosomal subunit protein uL4 (207 aa).

The tract at residues 45–78 (RQGTHKTKNRAEVSGGGRKPWRQKGTGRARQGSI) is disordered.

Belongs to the universal ribosomal protein uL4 family. In terms of assembly, part of the 50S ribosomal subunit.

Its function is as follows. One of the primary rRNA binding proteins, this protein initially binds near the 5'-end of the 23S rRNA. It is important during the early stages of 50S assembly. It makes multiple contacts with different domains of the 23S rRNA in the assembled 50S subunit and ribosome. In terms of biological role, forms part of the polypeptide exit tunnel. The chain is Large ribosomal subunit protein uL4 from Geobacillus sp. (strain WCH70).